The following is a 1461-amino-acid chain: Regulation of nuclear pre-mRNA domain-containing protein 2 (1461 aa).

Ala-2 is modified (N-acetylalanine). At Ser-16 the chain carries Phosphoserine. The region spanning 19–149 (SAGALESSLD…ALREALSTTF (131 aa)) is the CID domain. 2 disordered regions span residues 311-438 (STLP…TSLS) and 469-504 (NTGV…TTSH). Residues 352–368 (ESEKSATPEPVTDNRDV) show a composition bias toward basic and acidic residues. Ser-356 is subject to Phosphoserine. The residue at position 358 (Thr-358) is a Phosphothreonine. A compositionally biased stretch (acidic residues) spans 369–378 (EDMELSDVED). Position 374 is a phosphoserine (Ser-374). Basic and acidic residues predominate over residues 379–394 (DGSKIIVEDRKEKPAE). A compositionally biased stretch (polar residues) spans 397-416 (AVSTSVPTKPTENISKASSC). 2 stretches are compositionally biased toward low complexity: residues 417-426 (TPVPVTMTAT) and 473-491 (SPAS…NLTS). A phosphoserine mark is found at Ser-473, Ser-476, and Ser-479. A Phosphothreonine modification is found at Thr-482. Ser-485 is modified (phosphoserine). Thr-517 bears the Phosphothreonine mark. Residues 547–623 (TGNPVPASEA…SPGLPSTTFK (77 aa)) are disordered. Over residues 553–566 (ASEAASQSTSASPA) the composition is skewed to low complexity. The residue at position 564 (Ser-564) is a Phosphoserine. The span at 567–583 (NTTVSTIKGRNLPSSAQ) shows a compositional bias: polar residues. Ser-593 carries the post-translational modification Phosphoserine. Positions 593-614 (SPNSSTSEVSSTSASKASIGQS) are enriched in low complexity. The residue at position 598 (Thr-598) is a Phosphothreonine. Phosphoserine is present on residues Ser-614, Ser-663, Ser-665, and Ser-716. Disordered regions lie at residues 696 to 849 (GSSA…MMNL), 900 to 997 (SENC…EKVL), 1016 to 1102 (ASRK…SGEP), 1132 to 1312 (STSG…APPL), and 1340 to 1461 (FGVL…PPRY). Thr-723 bears the Phosphothreonine mark. Residue Ser-730 is modified to Phosphoserine. Thr-732 is subject to Phosphothreonine. The segment covering 742–752 (PTSSSVDTMSL) has biased composition (polar residues). A phosphoserine mark is found at Ser-758 and Ser-762. Low complexity predominate over residues 758-768 (SPGSSTPSSTR). Thr-763 bears the Phosphothreonine mark. Phosphoserine is present on residues Ser-769, Ser-817, Ser-826, Ser-900, Ser-909, Ser-928, Ser-965, and Ser-976. Over residues 927-954 (RSPSPSKNDSFFTPDSNHNSLSQSTTGH) the composition is skewed to polar residues. Positions 1031-1055 (SKGTPSDGVSLSNLTQPSLTATDQQ) are enriched in polar residues. 2 positions are modified to phosphoserine: Ser-1068 and Ser-1099. The span at 1141-1150 (GPSSASELAS) shows a compositional bias: low complexity. Gly residues predominate over residues 1151–1160 (LGGGGSGGLT). Residues 1174–1189 (FQESVGSFRSNSFNST) are compositionally biased toward polar residues. 2 stretches are compositionally biased toward pro residues: residues 1267–1277 (FPTPPPPPPPG) and 1290–1299 (STPPPPPPPV). Arg-1366 is subject to Asymmetric dimethylarginine. Gly residues predominate over residues 1382 to 1391 (PHGGGGGGGS). Over residues 1417 to 1434 (PRPDFRPREPFLSRDPFH) the composition is skewed to basic and acidic residues. An asymmetric dimethylarginine mark is found at Arg-1424 and Arg-1430.

As to quaternary structure, associates with the RNA polymerase II complex.

The chain is Regulation of nuclear pre-mRNA domain-containing protein 2 (RPRD2) from Homo sapiens (Human).